The primary structure comprises 173 residues: ATP-dependent protease subunit HslV (173 aa).

T2 is an active-site residue. Na(+)-binding residues include G158, D161, and T164.

This sequence belongs to the peptidase T1B family. HslV subfamily. In terms of assembly, a double ring-shaped homohexamer of HslV is capped on each side by a ring-shaped HslU homohexamer. The assembly of the HslU/HslV complex is dependent on binding of ATP.

Its subcellular location is the cytoplasm. It catalyses the reaction ATP-dependent cleavage of peptide bonds with broad specificity.. Its activity is regulated as follows. Allosterically activated by HslU binding. Functionally, protease subunit of a proteasome-like degradation complex believed to be a general protein degrading machinery. This chain is ATP-dependent protease subunit HslV, found in Actinobacillus succinogenes (strain ATCC 55618 / DSM 22257 / CCUG 43843 / 130Z).